The primary structure comprises 122 residues: MIQTESRLEVADNTGAREVMCIKVLGGSKRRYAGIGDIIKVTVKEATPRGRVKKGEIYNAVVVRTAKGVRRQDGSLIKFDGNAAVLLNNKLEPIGTRIFGPVTRELRSERFMKIVSLAPEVL.

Belongs to the universal ribosomal protein uL14 family. In terms of assembly, part of the 50S ribosomal subunit. Forms a cluster with proteins L3 and L19. In the 70S ribosome, L14 and L19 interact and together make contacts with the 16S rRNA in bridges B5 and B8.

In terms of biological role, binds to 23S rRNA. Forms part of two intersubunit bridges in the 70S ribosome. The chain is Large ribosomal subunit protein uL14 from Burkholderia vietnamiensis (strain G4 / LMG 22486) (Burkholderia cepacia (strain R1808)).